Here is a 427-residue protein sequence, read N- to C-terminus: Light-independent protochlorophyllide reductase subunit N (427 aa).

[4Fe-4S] cluster contacts are provided by Cys28, Cys53, and Cys114.

Belongs to the BchN/ChlN family. As to quaternary structure, protochlorophyllide reductase is composed of three subunits; BchL, BchN and BchB. Forms a heterotetramer of two BchB and two BchN subunits. Requires [4Fe-4S] cluster as cofactor.

It catalyses the reaction chlorophyllide a + oxidized 2[4Fe-4S]-[ferredoxin] + 2 ADP + 2 phosphate = protochlorophyllide a + reduced 2[4Fe-4S]-[ferredoxin] + 2 ATP + 2 H2O. Its pathway is porphyrin-containing compound metabolism; bacteriochlorophyll biosynthesis (light-independent). Its function is as follows. Component of the dark-operative protochlorophyllide reductase (DPOR) that uses Mg-ATP and reduced ferredoxin to reduce ring D of protochlorophyllide (Pchlide) to form chlorophyllide a (Chlide). This reaction is light-independent. The NB-protein (BchN-BchB) is the catalytic component of the complex. This chain is Light-independent protochlorophyllide reductase subunit N, found in Jannaschia sp. (strain CCS1).